A 113-amino-acid chain; its full sequence is Hydrogenase maturation factor HypA (113 aa).

H2 provides a ligand contact to Ni(2+). Zn(2+) is bound by residues C73, C76, C89, and C92.

This sequence belongs to the HypA/HybF family.

In terms of biological role, involved in the maturation of [NiFe] hydrogenases. Required for nickel insertion into the metal center of the hydrogenase. The protein is Hydrogenase maturation factor HypA of Azotobacter chroococcum mcd 1.